The chain runs to 217 residues: Large ribosomal subunit protein uL3 (217 aa).

The protein belongs to the universal ribosomal protein uL3 family. In terms of assembly, part of the 50S ribosomal subunit. Forms a cluster with proteins L14 and L19.

Its function is as follows. One of the primary rRNA binding proteins, it binds directly near the 3'-end of the 23S rRNA, where it nucleates assembly of the 50S subunit. The sequence is that of Large ribosomal subunit protein uL3 from Mycobacterium leprae (strain TN).